Reading from the N-terminus, the 296-residue chain is Aquaporin PIP1-6 (296 aa).

A run of 2 helical transmembrane segments spans residues I63–V83 and I98–H120. Residues N122–A124 carry the NPA 1 motif. A run of 3 helical transmembrane segments spans residues V141–F161, G183–A203, and A217–I237. Positions N243–A245 match the NPA 2 motif. Residues I265–L285 form a helical membrane-spanning segment.

It belongs to the MIP/aquaporin (TC 1.A.8) family. PIP (TC 1.A.8.11) subfamily.

Its subcellular location is the cell membrane. Its function is as follows. Aquaporins facilitate the transport of water and small neutral solutes across cell membranes. The protein is Aquaporin PIP1-6 (PIP1-6) of Zea mays (Maize).